The following is a 505-amino-acid chain: Cytochrome P450 monooxygenase iliC (505 aa).

Residues 6 to 26 traverse the membrane as a helical segment; the sequence is LIAQHSLTLTIASSVLLVFLL. A heme-binding site is contributed by Cys453.

The protein belongs to the cytochrome P450 family. It depends on heme as a cofactor.

It is found in the membrane. The enzyme catalyses (3E,5S)-3-[(2E,4E,8S,10E,12Z)-1-hydroxy-4,8-dimethyltetradeca-2,4,10,12-tetraen-1-ylidene]-5-[(4-hydroxyphenyl)methyl]pyrrolidine-2,4-dione + reduced [NADPH--hemoprotein reductase] + O2 = 3-[(2E,4E,8S,10E,12Z)-4,8-dimethyltetradeca-2,4,10,12-tetraenoyl]-4-hydroxy-5-(4-hydroxyphenyl)-1,2-dihydropyridin-2-one + oxidized [NADPH--hemoprotein reductase] + 2 H2O. Its pathway is mycotoxin biosynthesis. Functionally, cytochrome P450 monooxygenase; part of the gene cluster that mediates the biosynthesis of ilicicolin H, a 4-hydroxy-2-pyridonealkaloid that has potent and broad antifungal activities by inhibiting the mitochondrial respiration chain. IliC catalyzes the ring expansion of the tetramate intermediate to the acyclic 2-pyridone intermediate that contains the trans bis-diene chain. The biosynthesis of ilicicolin H starts with formation of the tetramic acid by the hybrid PKS-NRPS synthetase iliA with the partnering trans-enoyl reductase iliB since iliA lacks a designated enoylreductase (ER) domain. The cytochrome P450 monooxygenase iliC then catalyzes the ring expansion of the tetramate to the acyclic 2-pyridone. The pericyclase iliD further converts the acyclic 2-pyridone into 8-epi-ilicicolin H. 8-epi-ilicicolin H might then spontaneously convert to ilicicolin H since ilicicolin H is produced in the absence of the epimerase iliE, in contrast to what was observed for the Talaromyces variabilis ilicolin H biosynthetic pathway. The protein is Cytochrome P450 monooxygenase iliC of Neonectria sp. (strain DH2).